The sequence spans 648 residues: Protein kinase YegI (648 aa).

The Protein kinase domain maps to 15-302 (TTLGRELGKG…KAWVAALDSL (288 aa)). Residues 21 to 29 (LGKGGEGAV) and Lys-41 each bind ATP. Asp-143 (proton acceptor) is an active-site residue.

Autophosphorylated. Dephosphorylated by PphC.

Probable serine/threonine kinase. The protein is Protein kinase YegI (yegI) of Escherichia coli (strain K12).